The primary structure comprises 56 residues: Large ribosomal subunit protein bL32 (56 aa).

Belongs to the bacterial ribosomal protein bL32 family.

This is Large ribosomal subunit protein bL32 from Synechococcus sp. (strain CC9311).